A 558-amino-acid chain; its full sequence is Protein NRT1/ PTR FAMILY 2.3 (558 aa).

12 helical membrane-spanning segments follow: residues 33–53 (TLLG…VFLI), 69–89 (VANG…DSFF), 92–112 (IPVI…LTLI), 128–148 (VLCT…LALV), 176–196 (FFNW…TAIV), 203–223 (SWKL…IVFV), 329–349 (LWLS…LIVL), 371–391 (VIII…VFPM), 403–423 (LQKV…SAVV), 439–459 (VLWL…QFPA), 478–498 (SLTS…IDLI), and 517–537 (VYWL…VCSW).

It belongs to the major facilitator superfamily. Proton-dependent oligopeptide transporter (POT/PTR) (TC 2.A.17) family. Expressed in flowers, siliques and root epidermis or cortex. Detected in shoots.

The protein resides in the membrane. In terms of biological role, transporter involved in a passive nitrate efflux. This Arabidopsis thaliana (Mouse-ear cress) protein is Protein NRT1/ PTR FAMILY 2.3 (NPF2.3).